The following is a 1394-amino-acid chain: Kinesin-like protein KIF27 (1394 aa).

A Kinesin motor domain is found at 5 to 341 (PIKVAVRIRP…LKYANRARNI (337 aa)). Position 84–91 (84–91 (GQTGSGKT)) interacts with ATP. Coiled-coil stretches lie at residues 352–418 (QADR…IEQA) and 493–554 (QVVF…ELAK). Disordered regions lie at residues 551 to 583 (ELAK…PHTA) and 642 to 664 (FSDN…SRSH). Over residues 555-565 (RSSSMPTSTKE) the composition is skewed to polar residues. Basic and acidic residues predominate over residues 571–580 (PDARAPEKRP). Phosphoserine is present on residues Ser643, Ser646, Ser672, Ser675, and Ser704. Residues 709-980 (LQKLRTSELI…NKKLRSSQAL (272 aa)) adopt a coiled-coil conformation. Ser999 carries the post-translational modification Phosphoserine. Coiled-coil stretches lie at residues 1010-1078 (TEEK…SIQN), 1118-1152 (NKVI…HELE), and 1187-1226 (QDGE…RLKD). Positions 1267-1280 (TENTKLNGREKEVD) are enriched in basic and acidic residues. The segment at 1267–1340 (TENTKLNGRE…SQSPPPPQLQ (74 aa)) is disordered. Composition is skewed to polar residues over residues 1281–1295 (NSSS…TQQI) and 1310–1320 (APSSGQLQSSA). A phosphoserine mark is found at Ser1365 and Ser1387. Residues 1375-1394 (SLGAGVRSVTADSLEEPEES) form a disordered region.

The protein belongs to the TRAFAC class myosin-kinesin ATPase superfamily. Kinesin family. KIF27 subfamily. Interacts with STK36.

The protein resides in the cytoplasm. The protein localises to the cytoskeleton. It is found in the cell projection. Its subcellular location is the cilium. Functionally, plays an essential role in motile ciliogenesis. The sequence is that of Kinesin-like protein KIF27 (Kif27) from Rattus norvegicus (Rat).